Reading from the N-terminus, the 353-residue chain is 3-dehydroquinate synthase (353 aa).

NAD(+) contacts are provided by residues 61 to 66, 119 to 120, K132, and K141; these read DGEEAK and TT. The Zn(2+) site is built by E174, H238, and H254.

The protein belongs to the sugar phosphate cyclases superfamily. Dehydroquinate synthase family. Co(2+) serves as cofactor. Requires Zn(2+) as cofactor. NAD(+) is required as a cofactor.

The protein resides in the cytoplasm. The catalysed reaction is 7-phospho-2-dehydro-3-deoxy-D-arabino-heptonate = 3-dehydroquinate + phosphate. It functions in the pathway metabolic intermediate biosynthesis; chorismate biosynthesis; chorismate from D-erythrose 4-phosphate and phosphoenolpyruvate: step 2/7. Its function is as follows. Catalyzes the conversion of 3-deoxy-D-arabino-heptulosonate 7-phosphate (DAHP) to dehydroquinate (DHQ). The sequence is that of 3-dehydroquinate synthase from Sulfolobus acidocaldarius (strain ATCC 33909 / DSM 639 / JCM 8929 / NBRC 15157 / NCIMB 11770).